The chain runs to 148 residues: UPF0735 ACT domain-containing protein Dred_1164 (148 aa).

An ACT domain is found at 72–147; sequence TLALLMEHQP…GVREVRLVGQ (76 aa).

It belongs to the UPF0735 family.

The protein is UPF0735 ACT domain-containing protein Dred_1164 of Desulforamulus reducens (strain ATCC BAA-1160 / DSM 100696 / MI-1) (Desulfotomaculum reducens).